The primary structure comprises 98 residues: NADH-ubiquinone oxidoreductase chain 4L (98 aa).

3 helical membrane-spanning segments follow: residues 1–21 (MTLI…GLLM), 29–49 (ALLC…LTIL), and 61–81 (IILL…LVTI).

It belongs to the complex I subunit 4L family. As to quaternary structure, core subunit of respiratory chain NADH dehydrogenase (Complex I) which is composed of 45 different subunits.

The protein resides in the mitochondrion inner membrane. It carries out the reaction a ubiquinone + NADH + 5 H(+)(in) = a ubiquinol + NAD(+) + 4 H(+)(out). Core subunit of the mitochondrial membrane respiratory chain NADH dehydrogenase (Complex I) which catalyzes electron transfer from NADH through the respiratory chain, using ubiquinone as an electron acceptor. Part of the enzyme membrane arm which is embedded in the lipid bilayer and involved in proton translocation. The protein is NADH-ubiquinone oxidoreductase chain 4L (MT-ND4L) of Eubalaena australis (Southern right whale).